Consider the following 317-residue polypeptide: Nitrilase (317 aa).

The 276-residue stretch at 5-280 (VKVAVVQAEP…DGVIISELDM (276 aa)) folds into the CN hydrolase domain. Glu-45 serves as the catalytic Proton acceptor. Lys-125 is a catalytic residue. The Nucleophile role is filled by Cys-165.

Belongs to the carbon-nitrogen hydrolase superfamily. Nitrilase family.

The catalysed reaction is a nitrile + 2 H2O = a carboxylate + NH4(+). Functionally, nitrilase that hydrolyzes preferentially 4-cyanopyridine. Is also able to hydrolyze some aliphatic nitriles, such as phenylacetonitrile. The protein is Nitrilase of Meyerozyma guilliermondii (strain ATCC 6260 / CBS 566 / DSM 6381 / JCM 1539 / NBRC 10279 / NRRL Y-324) (Yeast).